The primary structure comprises 315 residues: Phosphomutase-like protein 3 (315 aa).

Residues 1 to 19 (MQQFLTLGALWTLFNVATT) form the signal peptide. The Tele-phosphohistidine intermediate role is filled by His-77. N-linked (GlcNAc...) asparagine glycans are attached at residues Asn-88 and Asn-154. Glu-173 functions as the Proton donor/acceptor in the catalytic mechanism. The N-linked (GlcNAc...) asparagine glycan is linked to Asn-185. Asn-286 is lipidated: GPI-anchor amidated asparagine. Residues 287-315 (DAWDTFKDWCPNPPASISGTATSTATGSA) constitute a propeptide, removed in mature form.

This sequence belongs to the phosphoglycerate mutase family.

The protein localises to the cell membrane. The polypeptide is Phosphomutase-like protein 3 (PGA12) (Candida albicans (strain SC5314 / ATCC MYA-2876) (Yeast)).